The chain runs to 605 residues: Poly [ADP-ribose] polymerase 2-B (605 aa).

A disordered region spans residues 96 to 122 (NAAAAAAVTDGGDQDKTKSAKDDDGDD). Positions 108-122 (DQDKTKSAKDDDGDD) are enriched in basic and acidic residues. The region spanning 153–260 (AYHVLQVGDE…TKLETRTASF (108 aa)) is the WGR domain. A PARP alpha-helical domain is found at 250-370 (ETKLETRTAS…EIEIAIKLLE (121 aa)). The 228-residue stretch at 378–605 (HPLYARYKQF…NVNFNFKRWG (228 aa)) folds into the PARP catalytic domain.

Belongs to the ARTD/PARP family.

Its subcellular location is the nucleus. The catalysed reaction is NAD(+) + (ADP-D-ribosyl)n-acceptor = nicotinamide + (ADP-D-ribosyl)n+1-acceptor + H(+).. It catalyses the reaction L-aspartyl-[protein] + NAD(+) = 4-O-(ADP-D-ribosyl)-L-aspartyl-[protein] + nicotinamide. The enzyme catalyses L-glutamyl-[protein] + NAD(+) = 5-O-(ADP-D-ribosyl)-L-glutamyl-[protein] + nicotinamide. Functionally, involved in the base excision repair (BER) pathway, by catalyzing the poly(ADP-ribosyl)ation of a limited number of acceptor proteins involved in chromatin architecture and in DNA metabolism. This modification follows DNA damages and appears as an obligatory step in a detection/signaling pathway leading to the reparation of DNA strand breaks. The protein is Poly [ADP-ribose] polymerase 2-B (PARP2-B) of Oryza sativa subsp. japonica (Rice).